Reading from the N-terminus, the 184-residue chain is MHKIVFVTGNKGKFAEVRDILKNFGIEAIQNKDGYPELQEDELEPIAANGAQYVANKLNMPVMVDDSGIFINALNGFPGPYSRFVEDKLGNPKVLKLMEGEKDRSAYFKTVIGYCEPGQEPLVFPGVVEGKIAYEERGTGGFGYDPIFEYNGMTFGELGDEEKNKVSHRRRAVDNFLEWFIGGA.

Residue 8 to 13 participates in substrate binding; the sequence is TGNKGK. Residues Glu37 and Asp66 each contribute to the Mg(2+) site. Asp66 functions as the Proton acceptor in the catalytic mechanism. Substrate is bound by residues Ser67, 142 to 145, Lys163, and 168 to 169; these read FGYD and HR.

The protein belongs to the HAM1 NTPase family. In terms of assembly, homodimer. It depends on Mg(2+) as a cofactor.

The catalysed reaction is XTP + H2O = XMP + diphosphate + H(+). The enzyme catalyses dITP + H2O = dIMP + diphosphate + H(+). It carries out the reaction ITP + H2O = IMP + diphosphate + H(+). Functionally, pyrophosphatase that catalyzes the hydrolysis of nucleoside triphosphates to their monophosphate derivatives, with a high preference for the non-canonical purine nucleotides XTP (xanthosine triphosphate), dITP (deoxyinosine triphosphate) and ITP. Seems to function as a house-cleaning enzyme that removes non-canonical purine nucleotides from the nucleotide pool, thus preventing their incorporation into DNA/RNA and avoiding chromosomal lesions. In Methanosarcina mazei (strain ATCC BAA-159 / DSM 3647 / Goe1 / Go1 / JCM 11833 / OCM 88) (Methanosarcina frisia), this protein is dITP/XTP pyrophosphatase.